We begin with the raw amino-acid sequence, 373 residues long: MSEKKINLLDLDLPGLKALLTEMGEKPFRAQQIMQWIYHFGVSDFEQMTNINKAMRAKLAARCEIVAPEITSYQKSSDGTIKFAINVGQGQEVETVYIPEDDRATLCVSSQVGCALECTFCSTAQQGFNRNLTVSEIVGQIWRVSHFLGFQKETGERPISNVVMMGMGEPLLNLANVVPAMNIMLDDYGFGLSKRRVTLSTSGVVPALDKLGDVIDVALAVSIHAPNDELRDVLVPINKKYPLQEFLAAIRRYLEKSNANRGRVTLEYVMLDHINDSTDQAHELAKLMKDTPCKINLIPFNPYPGSPYGRSSNSRIDRFAKVLMEYDLTVIVRKTRGDDIDAACGQLAGDIRDRTKRLAKKRMQESQISVTMN.

The Proton acceptor role is filled by E94. Positions 100 to 339 (EDDRATLCVS…VIVRKTRGDD (240 aa)) constitute a Radical SAM core domain. An intrachain disulfide couples C107 to C344. 3 residues coordinate [4Fe-4S] cluster: C114, C118, and C121. Residues 168–169 (GE), S200, 222–224 (SIH), and N301 contribute to the S-adenosyl-L-methionine site. Residue C344 is the S-methylcysteine intermediate of the active site.

It belongs to the radical SAM superfamily. RlmN family. [4Fe-4S] cluster is required as a cofactor.

The protein localises to the cytoplasm. It carries out the reaction adenosine(2503) in 23S rRNA + 2 reduced [2Fe-2S]-[ferredoxin] + 2 S-adenosyl-L-methionine = 2-methyladenosine(2503) in 23S rRNA + 5'-deoxyadenosine + L-methionine + 2 oxidized [2Fe-2S]-[ferredoxin] + S-adenosyl-L-homocysteine. It catalyses the reaction adenosine(37) in tRNA + 2 reduced [2Fe-2S]-[ferredoxin] + 2 S-adenosyl-L-methionine = 2-methyladenosine(37) in tRNA + 5'-deoxyadenosine + L-methionine + 2 oxidized [2Fe-2S]-[ferredoxin] + S-adenosyl-L-homocysteine. Its function is as follows. Specifically methylates position 2 of adenine 2503 in 23S rRNA and position 2 of adenine 37 in tRNAs. m2A2503 modification seems to play a crucial role in the proofreading step occurring at the peptidyl transferase center and thus would serve to optimize ribosomal fidelity. The sequence is that of Dual-specificity RNA methyltransferase RlmN from Shewanella amazonensis (strain ATCC BAA-1098 / SB2B).